The chain runs to 50 residues: AEDCVGRKACTREWYPVCGSDGVTYSNPCNFSAQQEQCDPNITIAHMGEC.

Residues 2–50 form the Kazal-like domain; sequence EDCVGRKACTREWYPVCGSDGVTYSNPCNFSAQQEQCDPNITIAHMGEC. 2 cysteine pairs are disulfide-bonded: Cys10/Cys29 and Cys18/Cys50. N-linked (GlcNAc...) asparagine glycosylation is found at Asn30 and Asn41.

Its function is as follows. Serine protease inhibitor. Strongly inhibits human neutrophil elastase and trypsin, also inhibits porcine pancreatic elastase and subtilisin A. Does not inhibit chymotrypsin, plasma kallikrein, pancreatic kallikrein, thrombin or papain. This chain is Protease inhibitor 2, found in Cenchritis muricatus (Beaded periwinkle).